The sequence spans 236 residues: Rho-related GTP-binding protein RhoV (236 aa).

The interval 1–27 (MPPRELSEAEPPPLRAPTPPPRRRSAP) is disordered. Residues 10–20 (EPPPLRAPTPP) show a composition bias toward pro residues. Residue serine 25 is modified to Phosphoserine. GTP contacts are provided by residues 38–45 (GDGAVGKS), 85–89 (DTAGQ), and 143–146 (TQAD). Cysteine 234 carries S-palmitoyl cysteine lipidation.

This sequence belongs to the small GTPase superfamily. Rho family. In terms of assembly, interacts with PAK2. Mg(2+) serves as cofactor. As to expression, highly expressed in pancreas, placenta, and fetal brain.

Its subcellular location is the cell membrane. The protein resides in the endosome membrane. In terms of biological role, plays a role in the control of the actin cytoskeleton via activation of the JNK pathway. The protein is Rho-related GTP-binding protein RhoV of Homo sapiens (Human).